A 69-amino-acid chain; its full sequence is Sec-independent protein translocase protein TatA (69 aa).

The chain crosses the membrane as a helical span at residues 1 to 21 (MGSLSIWHWLIVLAIALLLFG). The segment at 41–69 (KGMNDDEETPPPAQSTTSRTVEHKADESK) is disordered. A compositionally biased stretch (basic and acidic residues) spans 60 to 69 (TVEHKADESK).

It belongs to the TatA/E family. In terms of assembly, the Tat system comprises two distinct complexes: a TatABC complex, containing multiple copies of TatA, TatB and TatC subunits, and a separate TatA complex, containing only TatA subunits. Substrates initially bind to the TatABC complex, which probably triggers association of the separate TatA complex to form the active translocon.

The protein resides in the cell inner membrane. Functionally, part of the twin-arginine translocation (Tat) system that transports large folded proteins containing a characteristic twin-arginine motif in their signal peptide across membranes. TatA could form the protein-conducting channel of the Tat system. In Rhizobium rhizogenes (strain K84 / ATCC BAA-868) (Agrobacterium radiobacter), this protein is Sec-independent protein translocase protein TatA.